The sequence spans 398 residues: Exodeoxyribonuclease 7 large subunit (398 aa).

Belongs to the XseA family. As to quaternary structure, heterooligomer composed of large and small subunits.

The protein resides in the cytoplasm. It carries out the reaction Exonucleolytic cleavage in either 5'- to 3'- or 3'- to 5'-direction to yield nucleoside 5'-phosphates.. Its function is as follows. Bidirectionally degrades single-stranded DNA into large acid-insoluble oligonucleotides, which are then degraded further into small acid-soluble oligonucleotides. In Anaplasma phagocytophilum (strain HZ), this protein is Exodeoxyribonuclease 7 large subunit.